Here is a 243-residue protein sequence, read N- to C-terminus: Sec-independent protein translocase protein TATB, chloroplastic (243 aa).

A chloroplast-targeting transit peptide spans 1 to 67 (MTPTANLLLP…SRTRRRNVIC (67 aa)). Residues 68–69 (AS) are Lumenal-facing. The helical transmembrane segment at 70–90 (LFGVGAPEALVIGVVALLVFG) threads the bilayer. Over 91 to 243 (PKGLAEVARN…NKSQKAEGER (153 aa)) the chain is Stromal. 2 disordered regions span residues 129–165 (EIGI…PAPY) and 178–243 (IAAS…EGER). Polar residues-rich tracts occupy residues 135–152 (VSQS…NQQP) and 187–204 (NPQQ…PTTP).

The protein belongs to the TatB family. In terms of assembly, in thylakoid membranes, TATC and TATB form a large receptor complex, containing about eight TATC-TATB pairs, which binds the precursor protein. Twin arginine signal peptide promotes pH-triggered docking of TATA oligomers to TATC-TATB receptor complex, inducing a conformational switch of TATA that results in activation of the translocase. TATA dissociates from TATC-TATB upon completion of translocation.

It localises to the plastid. The protein localises to the chloroplast thylakoid membrane. Part of the twin-arginine translocation (Tat) system that transports large folded proteins containing a characteristic twin-arginine motif in their signal peptide across the thylakoid membrane. Involved in delta pH-dependent protein transport required for chloroplast development, especially thylakoid membrane formation. TATC and TATB mediate precursor recognition, whereas TATA facilitates translocation. The polypeptide is Sec-independent protein translocase protein TATB, chloroplastic (Zea mays (Maize)).